We begin with the raw amino-acid sequence, 304 residues long: tRNA-uridine aminocarboxypropyltransferase 1 (304 aa).

Residue Ser-2 is modified to N-acetylserine. The short motif at 206-209 (DSTW) is the DXTW element.

Belongs to the TDD superfamily. DTWD1 family.

Its subcellular location is the nucleus. It catalyses the reaction a uridine in tRNA + S-adenosyl-L-methionine = a 3-[(3S)-3-amino-3-carboxypropyl]uridine in tRNA + S-methyl-5'-thioadenosine + H(+). Functionally, catalyzes the formation of 3-(3-amino-3-carboxypropyl)uridine (acp3U) at position 20 in the D-loop of several cytoplasmic tRNAs (acp3U(20)). The protein is tRNA-uridine aminocarboxypropyltransferase 1 of Pongo abelii (Sumatran orangutan).